Reading from the N-terminus, the 486-residue chain is UDP-N-acetylmuramoyl-L-alanyl-D-glutamate--2,6-diaminopimelate ligase (486 aa).

Ser-33 contacts UDP-N-acetyl-alpha-D-muramoyl-L-alanyl-D-glutamate. 110–116 (GTNGKTS) provides a ligand contact to ATP. UDP-N-acetyl-alpha-D-muramoyl-L-alanyl-D-glutamate is bound by residues 152–153 (TT), Ser-179, Gln-185, and Arg-187. Position 219 is an N6-carboxylysine (Lys-219). Meso-2,6-diaminopimelate-binding positions include Arg-383, 407-410 (DNPR), Gly-455, and Glu-459. The Meso-diaminopimelate recognition motif motif lies at 407 to 410 (DNPR).

Belongs to the MurCDEF family. MurE subfamily. The cofactor is Mg(2+). Carboxylation is probably crucial for Mg(2+) binding and, consequently, for the gamma-phosphate positioning of ATP.

It is found in the cytoplasm. It catalyses the reaction UDP-N-acetyl-alpha-D-muramoyl-L-alanyl-D-glutamate + meso-2,6-diaminopimelate + ATP = UDP-N-acetyl-alpha-D-muramoyl-L-alanyl-gamma-D-glutamyl-meso-2,6-diaminopimelate + ADP + phosphate + H(+). It functions in the pathway cell wall biogenesis; peptidoglycan biosynthesis. In terms of biological role, catalyzes the addition of meso-diaminopimelic acid to the nucleotide precursor UDP-N-acetylmuramoyl-L-alanyl-D-glutamate (UMAG) in the biosynthesis of bacterial cell-wall peptidoglycan. The polypeptide is UDP-N-acetylmuramoyl-L-alanyl-D-glutamate--2,6-diaminopimelate ligase (Zymomonas mobilis subsp. mobilis (strain ATCC 31821 / ZM4 / CP4)).